Here is a 257-residue protein sequence, read N- to C-terminus: MNPVAFEIFGLEIRWYGILICMGIILAYGLAYKRSKIYNIDFDKLTDVFIVALPFSILCARLYYVIFNWSYYGANPSHILYIREGGLAIHGGLIGAVISGYLMSRYRKLNFLDLIDTVAPCFILAQAIGRWGNFFNSEAHGGIVSYEFISHFPKFIQNGMYIDGFYYHPTFLYESIWNIVVLIILLLITRKHLAKGSIFYLYLIFYSLGRFFIEGLRTDSLMLGSLRMAQVISLVFIILGIILIIKSNIKNKSTFKQ.

The next 4 helical transmembrane spans lie at 8–28, 48–68, 84–104, and 109–129; these read IFGL…ILAY, VFIV…VIFN, EGGL…YLMS, and LNFL…QAIG. Arginine 130 is an a 1,2-diacyl-sn-glycero-3-phospho-(1'-sn-glycerol) binding site. The next 3 helical transmembrane spans lie at 169 to 189, 196 to 216, and 225 to 245; these read PTFL…LLIT, GSIF…IEGL, and SLRM…ILII.

This sequence belongs to the Lgt family.

Its subcellular location is the cell membrane. It catalyses the reaction L-cysteinyl-[prolipoprotein] + a 1,2-diacyl-sn-glycero-3-phospho-(1'-sn-glycerol) = an S-1,2-diacyl-sn-glyceryl-L-cysteinyl-[prolipoprotein] + sn-glycerol 1-phosphate + H(+). It participates in protein modification; lipoprotein biosynthesis (diacylglyceryl transfer). Its function is as follows. Catalyzes the transfer of the diacylglyceryl group from phosphatidylglycerol to the sulfhydryl group of the N-terminal cysteine of a prolipoprotein, the first step in the formation of mature lipoproteins. The sequence is that of Phosphatidylglycerol--prolipoprotein diacylglyceryl transferase from Clostridium novyi (strain NT).